The chain runs to 505 residues: Glycerol kinase (505 aa).

ADP is bound at residue Thr-12. Thr-12, Thr-13, and Ser-14 together coordinate ATP. Thr-12 serves as a coordination point for sn-glycerol 3-phosphate. Residue Arg-16 coordinates ADP. 4 residues coordinate sn-glycerol 3-phosphate: Arg-82, Glu-83, Tyr-134, and Asp-246. Residues Arg-82, Glu-83, Tyr-134, Asp-246, and Gln-247 each contribute to the glycerol site. ADP is bound by residues Thr-268 and Gly-312. Residues Thr-268, Gly-312, Gln-316, and Gly-413 each coordinate ATP. Residues Gly-413 and Asn-417 each contribute to the ADP site.

This sequence belongs to the FGGY kinase family.

The catalysed reaction is glycerol + ATP = sn-glycerol 3-phosphate + ADP + H(+). It functions in the pathway polyol metabolism; glycerol degradation via glycerol kinase pathway; sn-glycerol 3-phosphate from glycerol: step 1/1. Inhibited by fructose 1,6-bisphosphate (FBP). Key enzyme in the regulation of glycerol uptake and metabolism. Catalyzes the phosphorylation of glycerol to yield sn-glycerol 3-phosphate. This Beutenbergia cavernae (strain ATCC BAA-8 / DSM 12333 / CCUG 43141 / JCM 11478 / NBRC 16432 / NCIMB 13614 / HKI 0122) protein is Glycerol kinase.